We begin with the raw amino-acid sequence, 209 residues long: uncharacterized protein (209 aa).

The segment at 177–209 is disordered; it reads DNSDNSSDSDDSDSLDGSDDLNDSDNVDNLFVG. Acidic residues predominate over residues 183 to 202; it reads SDSDDSDSLDGSDDLNDSDN.

This is an uncharacterized protein from Acanthamoeba polyphaga (Amoeba).